Consider the following 207-residue polypeptide: Small ribosomal subunit protein uS4 (207 aa).

The 69-residue stretch at 97-165 (SRLDNLVFRM…VKLALESKAV (69 aa)) folds into the S4 RNA-binding domain.

The protein belongs to the universal ribosomal protein uS4 family. As to quaternary structure, part of the 30S ribosomal subunit. Contacts protein S5. The interaction surface between S4 and S5 is involved in control of translational fidelity.

Functionally, one of the primary rRNA binding proteins, it binds directly to 16S rRNA where it nucleates assembly of the body of the 30S subunit. With S5 and S12 plays an important role in translational accuracy. The protein is Small ribosomal subunit protein uS4 of Mycoplasmoides gallisepticum (strain R(low / passage 15 / clone 2)) (Mycoplasma gallisepticum).